The chain runs to 981 residues: Colossin-C (981 aa).

A signal peptide spans 1–23; that stretch reads MKILYSLLLISSIILNTVLNISS. N-linked (GlcNAc...) asparagine glycosylation occurs at Asn-63. A disordered region spans residues 172 to 195; it reads EQTQPPTQPPTQPPTQPPTPPPFT. Residues 177–194 are compositionally biased toward pro residues; it reads PTQPPTQPPTQPPTPPPF. N-linked (GlcNAc...) asparagine glycosylation is found at Asn-222, Asn-591, and Asn-811.

It belongs to the serine-aspartate repeat-containing protein (SDr) family.

The protein localises to the secreted. The sequence is that of Colossin-C (colC) from Dictyostelium discoideum (Social amoeba).